A 159-amino-acid polypeptide reads, in one-letter code: ATP synthase subunit b (159 aa).

A helical transmembrane segment spans residues 2 to 22 (NISIPQIIAAILNFIILLLIV).

It belongs to the ATPase B chain family. F-type ATPases have 2 components, F(1) - the catalytic core - and F(0) - the membrane proton channel. F(1) has five subunits: alpha(3), beta(3), gamma(1), delta(1), epsilon(1). F(0) has three main subunits: a(1), b(2) and c(10-14). The alpha and beta chains form an alternating ring which encloses part of the gamma chain. F(1) is attached to F(0) by a central stalk formed by the gamma and epsilon chains, while a peripheral stalk is formed by the delta and b chains.

It is found in the cell membrane. F(1)F(0) ATP synthase produces ATP from ADP in the presence of a proton or sodium gradient. F-type ATPases consist of two structural domains, F(1) containing the extramembraneous catalytic core and F(0) containing the membrane proton channel, linked together by a central stalk and a peripheral stalk. During catalysis, ATP synthesis in the catalytic domain of F(1) is coupled via a rotary mechanism of the central stalk subunits to proton translocation. In terms of biological role, component of the F(0) channel, it forms part of the peripheral stalk, linking F(1) to F(0). The protein is ATP synthase subunit b of Clostridium botulinum (strain Okra / Type B1).